Here is a 211-residue protein sequence, read N- to C-terminus: Thiamine-phosphate synthase (211 aa).

4-amino-2-methyl-5-(diphosphooxymethyl)pyrimidine is bound by residues 37 to 41 (QLRIK) and Asn-69. Positions 70 and 89 each coordinate Mg(2+). 4-amino-2-methyl-5-(diphosphooxymethyl)pyrimidine is bound at residue Ser-108. Residue 134–136 (TQT) coordinates 2-[(2R,5Z)-2-carboxy-4-methylthiazol-5(2H)-ylidene]ethyl phosphate. Lys-137 is a binding site for 4-amino-2-methyl-5-(diphosphooxymethyl)pyrimidine. 2-[(2R,5Z)-2-carboxy-4-methylthiazol-5(2H)-ylidene]ethyl phosphate contacts are provided by residues Gly-166 and 186–187 (VS).

It belongs to the thiamine-phosphate synthase family. Mg(2+) serves as cofactor.

The catalysed reaction is 2-[(2R,5Z)-2-carboxy-4-methylthiazol-5(2H)-ylidene]ethyl phosphate + 4-amino-2-methyl-5-(diphosphooxymethyl)pyrimidine + 2 H(+) = thiamine phosphate + CO2 + diphosphate. It catalyses the reaction 2-(2-carboxy-4-methylthiazol-5-yl)ethyl phosphate + 4-amino-2-methyl-5-(diphosphooxymethyl)pyrimidine + 2 H(+) = thiamine phosphate + CO2 + diphosphate. The enzyme catalyses 4-methyl-5-(2-phosphooxyethyl)-thiazole + 4-amino-2-methyl-5-(diphosphooxymethyl)pyrimidine + H(+) = thiamine phosphate + diphosphate. It functions in the pathway cofactor biosynthesis; thiamine diphosphate biosynthesis; thiamine phosphate from 4-amino-2-methyl-5-diphosphomethylpyrimidine and 4-methyl-5-(2-phosphoethyl)-thiazole: step 1/1. In terms of biological role, condenses 4-methyl-5-(beta-hydroxyethyl)thiazole monophosphate (THZ-P) and 2-methyl-4-amino-5-hydroxymethyl pyrimidine pyrophosphate (HMP-PP) to form thiamine monophosphate (TMP). The protein is Thiamine-phosphate synthase of Enterobacter sp. (strain 638).